Here is a 297-residue protein sequence, read N- to C-terminus: N-acetylmuramic acid 6-phosphate etherase (297 aa).

An SIS domain is found at A55–K218. Residue E83 is the Proton donor of the active site. Residue E114 is part of the active site.

The protein belongs to the GCKR-like family. MurNAc-6-P etherase subfamily. As to quaternary structure, homodimer.

It catalyses the reaction N-acetyl-D-muramate 6-phosphate + H2O = N-acetyl-D-glucosamine 6-phosphate + (R)-lactate. Its pathway is amino-sugar metabolism; 1,6-anhydro-N-acetylmuramate degradation. It functions in the pathway amino-sugar metabolism; N-acetylmuramate degradation. The protein operates within cell wall biogenesis; peptidoglycan recycling. Specifically catalyzes the cleavage of the D-lactyl ether substituent of MurNAc 6-phosphate, producing GlcNAc 6-phosphate and D-lactate. Together with AnmK, is also required for the utilization of anhydro-N-acetylmuramic acid (anhMurNAc) either imported from the medium or derived from its own cell wall murein, and thus plays a role in cell wall recycling. In Serratia proteamaculans (strain 568), this protein is N-acetylmuramic acid 6-phosphate etherase.